The following is a 414-amino-acid chain: Chromobox protein homolog 6 (414 aa).

The Chromo domain occupies 11-69 (FAAESIIKRRIRKGRIEYLVKWKGWAIKYSTWEPEENILDSRLIAAFEQKERERELYGP). A Phosphoserine modification is found at serine 107. Disordered stretches follow at residues 127–152 (HRMS…PISP), 267–308 (APFD…VPNW), and 344–365 (ALEP…PEMS). Over residues 267-287 (APFDAHSSSSSGCPSPTLQSS) the composition is skewed to low complexity.

Component of a PRC1-like complex. Distinct PRC1-like core complexes are composed of a RING1 subunit (RING1B or RING1A), one of the six PCGF proteins (PCGF1-6), one PHC protein (PHC1-3) and one of the CBX proteins (CBX2, CBX4, CBX6, CBX7 or CBX8). Interacts with PCGF1, PCGF2, PCGF3, BMI1, PCGF5, PCGF6, RING1 and RNF2. May interact with H3C15 and H3C1. Interacts (via chromodomain) with single-stranded RNA (ssRNA). Ubiquitinated. Ubiquitination regulates the function of the Polycomb group (PcG) multiprotein PRC1-like complex. Deubiquitinated by USP26. As to expression, expressed in mouse embryonic stem cells.

It is found in the nucleus. The protein localises to the chromosome. Its function is as follows. Component of a Polycomb group (PcG) multiprotein PRC1-like complex, a complex class required to maintain the transcriptionally repressive state of many genes, including Hox genes, throughout development. PcG PRC1 complex acts via chromatin remodeling and modification of histones; it mediates monoubiquitination of histone H2A 'Lys-119', rendering chromatin heritably changed in its expressibility. Possibly contributes to the target selectivity of the PRC1 complex by binding specific regions of chromatin. Recruitment to chromatin might occur in an H3K27me3-independent fashion. May have a PRC1-independent function in embryonic stem cells. The sequence is that of Chromobox protein homolog 6 (Cbx6) from Mus musculus (Mouse).